The chain runs to 444 residues: MAERKYFGTDGVRGKVGSFPITPDFALKLGWAAGKVLATHGSKKVLIGKDTRISGYMLESALEAGLTAAGLSAVFVGPMPTPAVAYLTRTFRAEAGVVISASHNPYDDNGIKFFSAEGTKLPDDVEEAIEALLEQPMDCVESAELGKASRINDAAGRYIEFCKSTFPTSLSLEGYKIVVDCAHGATYHIAPSVLRELGAEIIEIGTKPNGLNINEKCGATDIEALRHKVLEIGADVGLAYDGDGDRIMMVDHLGNKVDGDQILYIIARETLRAGHLKGGVVGTLMSNMSLEIALKQLGIPFLRANVGDRYVLEKMQENGWKLGGENSGHIIILDKNTTGDGIIASLAVLTAMAQHKLSLHELTGAVKLFPQVLINVRFAGGENPLNSEKVKAVAAEVEQRLAGKGRILLRKSGTEPLIRVMVECEDAVLAQKSAEEIAEAVKNS.

Serine 102 (phosphoserine intermediate) is an active-site residue. Mg(2+)-binding residues include serine 102, aspartate 241, aspartate 243, and aspartate 245. Serine 102 is subject to Phosphoserine.

It belongs to the phosphohexose mutase family. Requires Mg(2+) as cofactor. Post-translationally, activated by phosphorylation.

It catalyses the reaction alpha-D-glucosamine 1-phosphate = D-glucosamine 6-phosphate. Its function is as follows. Catalyzes the conversion of glucosamine-6-phosphate to glucosamine-1-phosphate. The chain is Phosphoglucosamine mutase from Actinobacillus succinogenes (strain ATCC 55618 / DSM 22257 / CCUG 43843 / 130Z).